The primary structure comprises 384 residues: PqqA peptide cyclase (384 aa).

A Radical SAM core domain is found at 15-231 (PGPPLWLLAE…NQWRDKLAAE (217 aa)). Residues C29, C33, and C36 each coordinate [4Fe-4S] cluster.

Belongs to the radical SAM superfamily. PqqE family. In terms of assembly, interacts with PqqD. The interaction is necessary for activity of PqqE. It depends on [4Fe-4S] cluster as a cofactor.

The enzyme catalyses [PQQ precursor protein] + S-adenosyl-L-methionine = E-Y cross-linked-[PQQ precursor protein] + 5'-deoxyadenosine + L-methionine + H(+). Its pathway is cofactor biosynthesis; pyrroloquinoline quinone biosynthesis. Functionally, catalyzes the cross-linking of a glutamate residue and a tyrosine residue in the PqqA protein as part of the biosynthesis of pyrroloquinoline quinone (PQQ). In Ectopseudomonas mendocina (strain ymp) (Pseudomonas mendocina), this protein is PqqA peptide cyclase.